A 172-amino-acid chain; its full sequence is Adenine phosphoribosyltransferase (172 aa).

The protein belongs to the purine/pyrimidine phosphoribosyltransferase family. In terms of assembly, homodimer.

The protein resides in the cytoplasm. The enzyme catalyses AMP + diphosphate = 5-phospho-alpha-D-ribose 1-diphosphate + adenine. Its pathway is purine metabolism; AMP biosynthesis via salvage pathway; AMP from adenine: step 1/1. In terms of biological role, catalyzes a salvage reaction resulting in the formation of AMP, that is energically less costly than de novo synthesis. The protein is Adenine phosphoribosyltransferase of Exiguobacterium sibiricum (strain DSM 17290 / CCUG 55495 / CIP 109462 / JCM 13490 / 255-15).